The chain runs to 360 residues: Replication-associated protein (360 aa).

Residues 11–114 (SHRNANTFLT…PLAVFERGTF (104 aa)) enclose the CRESS-DNA virus Rep endonuclease domain. An RCR-1 motif is present at residues 18–21 (FLTY). Residues E52, H60, and H62 each coordinate a divalent metal cation. Positions 60–62 (HLH) match the RCR-2 motif. Y100 functions as the For DNA cleavage activity in the catalytic mechanism. The short motif at 100 to 103 (YILK) is the RCR-3 element. E104 is an a divalent metal cation binding site. The segment at 175-187 (SANKLFPEIQEEF) is oligomerization. Position 229-236 (229-236 (GPTRTGKS)) interacts with ATP. Positions 252-270 (VDWSSYNEDAIYNIVDDIP) are transactivation. A Nuclear localization signal motif is present at residues 292 to 303 (KYGKKKKVQKKS).

It belongs to the geminiviridae Rep protein family. Homooligomer. Rep binds to repeated DNA motifs (iterons). Forms the O-complex, which is a Rep-DNA complex involved in the initiation of RCR. Part of the C- and V-complexes which are RepA-Rep-DNA complexes involved in the c-sense and v-sense transcription. Mg(2+) is required as a cofactor. It depends on Mn(2+) as a cofactor.

It localises to the host nucleus. Its function is as follows. Essential for the replication of viral ssDNA. The closed circular ssDNA genome is first converted to a superhelical dsDNA. Rep binds a specific region at the genome origin of replication. It introduces an endonucleolytic nick within the conserved sequence 5'-TAATATTAC-3' in the intergenic region of the genome present in all geminiviruses, thereby initiating the rolling circle replication (RCR). Following cleavage, binds covalently to the 5'-phosphate of DNA as a tyrosyl ester. The cleavage gives rise to a free 3'-OH that serves as a primer for the cellular DNA polymerase. The polymerase synthesizes the (+) strand DNA by rolling circle mechanism. After one round of replication, a Rep-catalyzed nucleotidyl transfer reaction releases a circular single-stranded virus genome, thereby terminating the replication. Displays origin-specific DNA cleavage, nucleotidyl transferase, ATPase and helicase activities. Acts as an inhibitor of C-sense gene transcription. In Maize streak virus genotype A (isolate Nigeria) (MSV), this protein is Replication-associated protein.